The following is a 78-amino-acid chain: Large ribosomal subunit protein bL28 (78 aa).

This sequence belongs to the bacterial ribosomal protein bL28 family.

This is Large ribosomal subunit protein bL28 from Marinobacter nauticus (strain ATCC 700491 / DSM 11845 / VT8) (Marinobacter aquaeolei).